Reading from the N-terminus, the 197-residue chain is Probable molybdenum cofactor guanylyltransferase (197 aa).

Residues 9-11 (LAG), K21, D65, and D94 contribute to the GTP site. D94 provides a ligand contact to Mg(2+).

It belongs to the MobA family. Mg(2+) serves as cofactor.

The protein resides in the cytoplasm. The enzyme catalyses Mo-molybdopterin + GTP + H(+) = Mo-molybdopterin guanine dinucleotide + diphosphate. Its function is as follows. Transfers a GMP moiety from GTP to Mo-molybdopterin (Mo-MPT) cofactor (Moco or molybdenum cofactor) to form Mo-molybdopterin guanine dinucleotide (Mo-MGD) cofactor. The chain is Probable molybdenum cofactor guanylyltransferase from Carboxydothermus hydrogenoformans (strain ATCC BAA-161 / DSM 6008 / Z-2901).